The following is a 220-amino-acid chain: UPF0502 protein PSPPH_2577 (220 aa).

Belongs to the UPF0502 family.

In Pseudomonas savastanoi pv. phaseolicola (strain 1448A / Race 6) (Pseudomonas syringae pv. phaseolicola (strain 1448A / Race 6)), this protein is UPF0502 protein PSPPH_2577.